The primary structure comprises 129 residues: Large ribosomal subunit protein eL32 (129 aa).

The protein belongs to the eukaryotic ribosomal protein eL32 family.

This chain is Large ribosomal subunit protein eL32 (rpl32e), found in Methanosarcina mazei (strain ATCC BAA-159 / DSM 3647 / Goe1 / Go1 / JCM 11833 / OCM 88) (Methanosarcina frisia).